The chain runs to 385 residues: Nuclear hormone receptor family member nhr-68 (385 aa).

Residues 4–79 (KEVCLVCQDF…VGMDKTSLQA (76 aa)) constitute a DNA-binding region (nuclear receptor). 2 consecutive NR C4-type zinc fingers follow at residues 7-27 (CLVCQDFSSGYHYGIPSCNGC) and 43-62 (CQFDQNCPVDKSIRCACRFC). A disordered region spans residues 81-110 (RDPIGYTKRNKKTLRHPMNELSGDESNSCT). Positions 145–384 (PKRSLKQALC…SFAKELIFGD (240 aa)) constitute an NR LBD domain. Residues 373-384 (FTSFAKELIFGD) form an AF-2 region.

This sequence belongs to the nuclear hormone receptor family.

Its subcellular location is the nucleus. Its function is as follows. Probable transcription factor that acts in a feed-forward loop with nhr-10 to activate genes, including itself, involved in the vitamin B12-independent breakdown of the short-chain fatty acid propionate. This pathway is triggered in response to a diet low in vitamin B12, when canonical vitamin B12-dependent propionate breakdown cannot function; the resulting accumulation of propionate is probably sensed by nhr-68 and/or nhr-10. This Caenorhabditis elegans protein is Nuclear hormone receptor family member nhr-68.